We begin with the raw amino-acid sequence, 274 residues long: tRNA-cytidine(32) 2-sulfurtransferase (274 aa).

The PP-loop motif motif lies at 40–45 (SGGKDS). Positions 115, 118, and 206 each coordinate [4Fe-4S] cluster.

Belongs to the TtcA family. As to quaternary structure, homodimer. Mg(2+) serves as cofactor. [4Fe-4S] cluster is required as a cofactor.

It is found in the cytoplasm. It carries out the reaction cytidine(32) in tRNA + S-sulfanyl-L-cysteinyl-[cysteine desulfurase] + AH2 + ATP = 2-thiocytidine(32) in tRNA + L-cysteinyl-[cysteine desulfurase] + A + AMP + diphosphate + H(+). It functions in the pathway tRNA modification. Functionally, catalyzes the ATP-dependent 2-thiolation of cytidine in position 32 of tRNA, to form 2-thiocytidine (s(2)C32). The sulfur atoms are provided by the cysteine/cysteine desulfurase (IscS) system. The sequence is that of tRNA-cytidine(32) 2-sulfurtransferase from Ectopseudomonas mendocina (strain ymp) (Pseudomonas mendocina).